The primary structure comprises 204 residues: Guanylate kinase (204 aa).

Residues glycine 4–threonine 182 enclose the Guanylate kinase-like domain. Glycine 11 to glycine 18 serves as a coordination point for ATP.

Belongs to the guanylate kinase family.

Its subcellular location is the cytoplasm. The catalysed reaction is GMP + ATP = GDP + ADP. Essential for recycling GMP and indirectly, cGMP. This chain is Guanylate kinase, found in Carboxydothermus hydrogenoformans (strain ATCC BAA-161 / DSM 6008 / Z-2901).